Reading from the N-terminus, the 95-residue chain is Large ribosomal subunit protein bL25 (95 aa).

Belongs to the bacterial ribosomal protein bL25 family. Part of the 50S ribosomal subunit; part of the 5S rRNA/L5/L18/L25 subcomplex. Contacts the 5S rRNA. Binds to the 5S rRNA independently of L5 and L18.

This is one of the proteins that binds to the 5S RNA in the ribosome where it forms part of the central protuberance. This is Large ribosomal subunit protein bL25 from Glaesserella parasuis serovar 5 (strain SH0165) (Haemophilus parasuis).